The primary structure comprises 91 residues: Non-specific lipid-transfer protein 1 (91 aa).

4 disulfide bridges follow: cysteine 4/cysteine 51, cysteine 14/cysteine 28, cysteine 29/cysteine 74, and cysteine 49/cysteine 88.

This sequence belongs to the plant LTP family. In terms of tissue distribution, detected in seeds (at protein level).

In terms of biological role, plant non-specific lipid-transfer proteins transfer phospholipids as well as galactolipids across membranes. May play a role in wax or cutin deposition in the cell walls of expanding epidermal cells and certain secretory tissues. The sequence is that of Non-specific lipid-transfer protein 1 from Carum carvi (Caraway).